The chain runs to 229 residues: Phosphatidylinositol N-acetylglucosaminyltransferase subunit GPI15 (229 aa).

The next 2 helical transmembrane spans lie at Ile59–Leu79 and Ile101–Val121.

Belongs to the PIGH family. Component of the phosphatidylinositol N-acetylglucosaminyltransferase (GPI-GlcNAc transferase) complex composed of at least GPI1, GPI2, GPI3, GPI15, GPI19 and ERI1.

Its subcellular location is the membrane. It carries out the reaction a 1,2-diacyl-sn-glycero-3-phospho-(1D-myo-inositol) + UDP-N-acetyl-alpha-D-glucosamine = a 6-(N-acetyl-alpha-D-glucosaminyl)-1-(1,2-diacyl-sn-glycero-3-phospho)-1D-myo-inositol + UDP + H(+). Its pathway is glycolipid biosynthesis; glycosylphosphatidylinositol-anchor biosynthesis. Functionally, part of the complex catalyzing the transfer of N-acetylglucosamine from UDP-N-acetylglucosamine to phosphatidylinositol, the first step of GPI biosynthesis. This Saccharomyces cerevisiae (strain ATCC 204508 / S288c) (Baker's yeast) protein is Phosphatidylinositol N-acetylglucosaminyltransferase subunit GPI15 (GPI15).